Here is a 327-residue protein sequence, read N- to C-terminus: Gibberellin 2-beta-dioxygenase 3 (327 aa).

Residues 173-278 form the Fe2OG dioxygenase domain; sequence GSDQVFRVNH…RVSFIYFGGP (106 aa). Y183 provides a ligand contact to 2-oxoglutarate. Fe cation is bound by residues H202, D204, and H259. The 2-oxoglutarate site is built by R269 and S271.

Belongs to the iron/ascorbate-dependent oxidoreductase family. GA2OX subfamily. L-ascorbate is required as a cofactor. It depends on Fe(2+) as a cofactor. In terms of tissue distribution, expressed in roots, shoot apex, leaf blades, leaf sheaths, stems and flowers.

It carries out the reaction gibberellin A1 + 2-oxoglutarate + O2 = gibberellin A8 + succinate + CO2. Catalyzes the 2-beta-hydroxylation of several biologically active gibberellins, leading to the homeostatic regulation of their endogenous level. Catabolism of gibberellins (GAs) plays a central role in plant development. In vitro, converts GA1, GA20, and GA29 to the corresponding 2-beta-hydroxylated products GA8, GA29-catabolite, respectively. In Oryza sativa subsp. japonica (Rice), this protein is Gibberellin 2-beta-dioxygenase 3.